Consider the following 66-residue polypeptide: Protein I177L (66 aa).

Asn-11 is a glycosylation site (N-linked (GlcNAc...) asparagine; by host).

Belongs to the asfivirus I177L family.

It is found in the virion. This chain is Protein I177L, found in Ornithodoros (relapsing fever ticks).